A 1035-amino-acid chain; its full sequence is Cell-division control histidine kinase PdhS (1035 aa).

The interval 1 to 613 (MSGSYPFIDI…HADGSEEPVD (613 aa)) is important for polar localization. The disordered stretch occupies residues 500–533 (QGLANTRAESETPVSETSSIEPVEPTPPVKTRSE). The tract at residues 614-1035 (AHLNAIAWRG…VFPPTRVLAD (422 aa)) is interaction with DivK. A PAS domain is found at 659–730 (HVEELKTILD…YLHGLSGNGV (72 aa)). The region spanning 802–1031 (RISHEIRTPL…VVEIVFPPTR (230 aa)) is the Histidine kinase domain. Histidine 805 carries the phosphohistidine; by autocatalysis modification.

Interacts with DivK.

The protein localises to the cytoplasm. The catalysed reaction is ATP + protein L-histidine = ADP + protein N-phospho-L-histidine.. Functions as a polar differentiation marker. Essential protein that, by localizing in the old pole of dividing cells, controls cell division and maturation, probably through control of DivK phosphorylation status and cellular distribution, which in turn regulates CtrA, a transcriptional regulator of the minB operon. The asymmetrical localization of this protein is probably required for cells to enter a new division cycle. This Brucella ovis (strain ATCC 25840 / 63/290 / NCTC 10512) protein is Cell-division control histidine kinase PdhS (pdhS).